A 292-amino-acid chain; its full sequence is NAD kinase (292 aa).

Asp-73 (proton acceptor) is an active-site residue. NAD(+) contacts are provided by residues 73–74, 147–148, His-158, Arg-175, Asp-177, 188–193, and Gln-247; these read DG, NE, and TAYSLS.

This sequence belongs to the NAD kinase family. The cofactor is a divalent metal cation.

It is found in the cytoplasm. It carries out the reaction NAD(+) + ATP = ADP + NADP(+) + H(+). Functionally, involved in the regulation of the intracellular balance of NAD and NADP, and is a key enzyme in the biosynthesis of NADP. Catalyzes specifically the phosphorylation on 2'-hydroxyl of the adenosine moiety of NAD to yield NADP. The sequence is that of NAD kinase from Klebsiella pneumoniae subsp. pneumoniae (strain ATCC 700721 / MGH 78578).